We begin with the raw amino-acid sequence, 92 residues long: Small ribosomal subunit protein uS19 (92 aa).

This sequence belongs to the universal ribosomal protein uS19 family.

In terms of biological role, protein S19 forms a complex with S13 that binds strongly to the 16S ribosomal RNA. This Picosynechococcus sp. (strain ATCC 27264 / PCC 7002 / PR-6) (Agmenellum quadruplicatum) protein is Small ribosomal subunit protein uS19.